The following is a 671-amino-acid chain: Chitin biosynthesis protein CHS5 (671 aa).

The Fibronectin type-III domain maps to 78–168 (KPESPVLKIV…EKVILRTHKM (91 aa)). Residues 166 to 262 (HKMTDMSGIT…RIVGVRGFYL (97 aa)) form the BRCT domain. The segment at 280–671 (EELSYSKENE…KKNKKKGKKK (392 aa)) is disordered. Threonine 305 bears the Phosphothreonine mark. The segment covering 311-321 (ASPNDNESNPS) has biased composition (polar residues). Positions 322–332 (EAKEQGEKSGH) are enriched in basic and acidic residues. Serine 338, serine 362, serine 365, serine 383, and serine 384 each carry phosphoserine. Residues 349–365 (ALENETTIETVNPSVRS) show a composition bias toward polar residues. A compositionally biased stretch (basic and acidic residues) spans 409–419 (KSEDTDTHSNE). Positions 434–443 (NNITTESAGE) are enriched in polar residues. Residues 461-486 (EIETPEVNESIEDANEPAEDSNEPVE) are compositionally biased toward acidic residues. Over residues 487 to 521 (DSNKPVKDSNKPVEDSNKPVEDSNKPVEDSNKPVE) the composition is skewed to basic and acidic residues. Positions 522 to 538 (DANEPVEDTSEPVEDAG) are enriched in acidic residues. Over residues 542–551 (QETNEFTTDI) the composition is skewed to polar residues. 2 positions are modified to phosphoserine: serine 573 and serine 579. Over residues 581–591 (EDVKPEEKGSE) the composition is skewed to basic and acidic residues. Lysine 584 is covalently cross-linked (Glycyl lysine isopeptide (Lys-Gly) (interchain with G-Cter in ubiquitin)). The residue at position 590 (serine 590) is a Phosphoserine. The span at 606 to 620 (GESTTHQKTEASASL) shows a compositional bias: polar residues. Residues 627–638 (EEQETTEAEVNT) show a composition bias toward acidic residues. Basic residues predominate over residues 657 to 671 (NKKKNKKNKKKGKKK).

Belongs to the CHS5 family. As to quaternary structure, component of the CHS5/6 complex composed of the 4 CHAPS proteins BCH1, BCH2, BUD7, and CHS6 as well as at least CHS5 and GTP-bound ARF1. The complex interacts with the cargo protein CHS3.

Its subcellular location is the golgi apparatus. It localises to the trans-Golgi network membrane. In terms of biological role, component of the CHS5/6 complex which mediates export of specific cargo proteins, including chitin synthase CHS3. Also involved in targeting FUS1 to sites of polarized growth. The protein is Chitin biosynthesis protein CHS5 (CHS5) of Saccharomyces cerevisiae (strain ATCC 204508 / S288c) (Baker's yeast).